Consider the following 1405-residue polypeptide: MKDLLKFLKQQSKTEEFNGIKIGLASPDLIRSWSFGEVKKPETINYRTFKPEREGLFCARIFGPVKDYECLCGKYKRLKHRGVICEKCGVEVTQTKVRRERMGHIELASPVAHIWFLKSLPSRIGLMLDMTLRDIERVLYFESFVVIEPGMTSLERGQMLTEETYLDALEEYGDEFEAKMGAEAVLELLRAIDLEKEIEQMREELPSINSETRRKKVTKRLKLMEAFHTSGNKPEWMILKVLPVLPPDLRPLVPLDGGRFATSDLNDLYRRVINRNNRLKRLLDLAAPDIIVRNEKRMLQESVDALLDNGRRGRAITGSNKRPLKSLADMIKGKQGRFRQNLLGKRVDYSGRSVITVGPTLRLHQCGLPKKMALELFKPFIYGKLEGRGLATTIKAAKKMVEREVAEVWDVLDEVIREHPVMLNRAPTLHRLGIQAFEPVLIEGKAIQLHPLVCAAYNADFDGDQMAVHVPLTLEAQLEARALMMSTNNILSPANGEPVITPSQDVVLGLYYTSRERINGRGEGMYFMSVAEVEKAYATGAAELHARVKVRITETIIDENGERSEQRRIVDTTVGRALLSQILPAGLSFDLVNQNMGKKQISKLLNTCYRQLGLKDTVIFADQLMYTGFRYATISGASVGIDDMVIPAEKYTLVADAEAEVLEIQEQFQSGLVTAGERYNKVIDIWASANEKVSKAMMENLSTETVINRDGVEEKQASFNSIYMMADSGARGSAAQIRQLAGMRGLMAKPDGSIIETPIVANFREGLNVLQYFISTHGARKGLADTALKTANSGYLTRRLVDVAQDLVVIEDDCGTHEGLTMKPLIEGGDVVEPLRERVLGRVVAVDVFYPGTEDVLAPRNTLLDEAWCDKLEEHSIDEVIVRSVITCDTDFGVCAACYGRDLARGHIINHGEAIGVVAAQSIGEPGTQLTMRTFHIGGAASRASAENNVQVKNSGSLKLHNAKYVTNTDGKLVIVSRSSELAIIDELGREKERYKVPYGTVLEKLEEASVEAGDIIANWDPHTHPIITEVAGSIKFVDMIDGVTMTRQTDELTGLSSIVILDVGQRGSAGKEMRPMIRLVGADGSDLMIPGTEVPAQYFLPGSAIVNLDDNAQIAVGDALARIPQESSKTRDITGGLPRVADLFEARKPKEPAILAEISGTISFGKETKGKRRLVITPADGGEQYEEMIPKWRNLNVFEGEKVERGEVIADGPEAAHDILRLRGIHNVANYIVNEVQDVYRLQGVKINDKHIEVIIRQMLRKCVITAAGDSEFLEGEQVEVSRVKIANRELVEQGKVPATFERELLGITKASLATESFISAASFQETTRVLTEAAVGGKSDNLRGLKENVIVGRLIPAGTGYAYHKTRNDARAKKDEPVVVNKITASEAEQNLADLLNLAGSQD.

Residues Cys-70, Cys-72, Cys-85, and Cys-88 each coordinate Zn(2+). The Mg(2+) site is built by Asp-460, Asp-462, and Asp-464. Positions 814, 888, 895, and 898 each coordinate Zn(2+).

It belongs to the RNA polymerase beta' chain family. In terms of assembly, the RNAP catalytic core consists of 2 alpha, 1 beta, 1 beta' and 1 omega subunit. When a sigma factor is associated with the core the holoenzyme is formed, which can initiate transcription. Mg(2+) serves as cofactor. The cofactor is Zn(2+).

It catalyses the reaction RNA(n) + a ribonucleoside 5'-triphosphate = RNA(n+1) + diphosphate. DNA-dependent RNA polymerase catalyzes the transcription of DNA into RNA using the four ribonucleoside triphosphates as substrates. This chain is DNA-directed RNA polymerase subunit beta', found in Shewanella oneidensis (strain ATCC 700550 / JCM 31522 / CIP 106686 / LMG 19005 / NCIMB 14063 / MR-1).